We begin with the raw amino-acid sequence, 445 residues long: MTKVRFAPSPTGKLHVGNVRTAIFNYLFARKAGGTFVLRIDDTDVERSTKAYEDGIRADLTWLGISWDETFKQSDRFDRYEAAAETLKAKGLLYPCYETGEDLDRKRRLQMANGRPPVYDRAALDLTDAEKAGFEAEGRKPHWRFKLSGNPVQWDDMVRGHVSIETSSLSDPILIREDGSFLYTLPSVLDDIESEITHIIRGEDHTTNSGAQIEIFEALGGKAPIFGHQALLVGADGGKLSKRTGSLGIADLRDVDGLEPMAIMSLLARIGTSDPVEAFADVEGILEGFDLGKLSRSPARFDDEELKRVNAKLLHAMPYDVAQPKLAVLGADKGEAVWEAVRPNLETLADAKAWAVLIDGPVTPVIEEPDYAAAAAQHLPAGELDGDSWSVWTNALKEATGRKGKQLFMPLRLMLTGEARGPEMAVLLPLIGRDKVLKRLAGEAA.

A 'HIGH' region motif is present at residues 8-18 (PSPTGKLHVGN). Positions 239-243 (KLSKR) match the 'KMSKS' region motif. Lys-242 serves as a coordination point for ATP.

This sequence belongs to the class-I aminoacyl-tRNA synthetase family. Glutamate--tRNA ligase type 1 subfamily. In terms of assembly, monomer.

It is found in the cytoplasm. The enzyme catalyses tRNA(Glu) + L-glutamate + ATP = L-glutamyl-tRNA(Glu) + AMP + diphosphate. Catalyzes the attachment of glutamate to tRNA(Glu) in a two-step reaction: glutamate is first activated by ATP to form Glu-AMP and then transferred to the acceptor end of tRNA(Glu). This is Glutamate--tRNA ligase 1 from Maricaulis maris (strain MCS10) (Caulobacter maris).